A 427-amino-acid chain; its full sequence is Enolase (427 aa).

A (2R)-2-phosphoglycerate-binding site is contributed by Gln163. Glu205 (proton donor) is an active-site residue. Mg(2+)-binding residues include Asp242, Glu285, and Asp312. 4 residues coordinate (2R)-2-phosphoglycerate: Lys337, Arg366, Ser367, and Lys388. The Proton acceptor role is filled by Lys337.

This sequence belongs to the enolase family. Mg(2+) is required as a cofactor.

Its subcellular location is the cytoplasm. It localises to the secreted. It is found in the cell surface. The catalysed reaction is (2R)-2-phosphoglycerate = phosphoenolpyruvate + H2O. It functions in the pathway carbohydrate degradation; glycolysis; pyruvate from D-glyceraldehyde 3-phosphate: step 4/5. Catalyzes the reversible conversion of 2-phosphoglycerate (2-PG) into phosphoenolpyruvate (PEP). It is essential for the degradation of carbohydrates via glycolysis. The polypeptide is Enolase (Nitrobacter hamburgensis (strain DSM 10229 / NCIMB 13809 / X14)).